The chain runs to 490 residues: MKYQDLRDFIALLEERGELKRIQQEIDPYLEITEISDRTLKAQGPALLFENVKGHDMPVLANLFGTPDRVALGMGQESVTALRDVGKLLAFLKEPEPPKGFRDALNLLPKYKKVLSMSPKSIKKAPCQQVVMSGDDVDLTKLPIQHCWPGDVAPLVTWGLTVTRGPHKERQNLGIYRQQLLGPNKLIMRWLSHRGGALDFQEWCQQHPGERFPVSVALGADPATILGAVTPVPDSLSEYAFAGLLRDSKTEVTQCLSNDLQVPAHAEIILEGYIEPGEMAAEGPYGDHTGYYNEVDEFPVFTVTHVTHRKDPIYHSTYTGRPPDEPAVLGVALNEVFIPLLQKQFPEIVDFYLPPEGCSYRLAVVTMKKQYPGHAKRVMMGVWSFLRQFMYTKFVIVCDDDVNARDWKDVIWAMTTRMDPARDTTLVENTPIDYLDFASPVSGLGSKMGMDATNKWPGETDREWGEPIVMSDEVKQRVDELWDELNIMES.

A Mn(2+)-binding site is contributed by asparagine 172. Prenylated FMN contacts are provided by residues 175–177 (IYR), 189–191 (RWL), and 194–195 (RG). A Mn(2+)-binding site is contributed by glutamate 238. The Proton donor role is filled by aspartate 287.

It belongs to the UbiD family. In terms of assembly, homohexamer. Requires prenylated FMN as cofactor. It depends on Mn(2+) as a cofactor.

It localises to the cell membrane. It carries out the reaction a 4-hydroxy-3-(all-trans-polyprenyl)benzoate + H(+) = a 2-(all-trans-polyprenyl)phenol + CO2. It participates in cofactor biosynthesis; ubiquinone biosynthesis. Functionally, catalyzes the decarboxylation of 3-octaprenyl-4-hydroxy benzoate to 2-octaprenylphenol, an intermediate step in ubiquinone biosynthesis. The protein is 3-octaprenyl-4-hydroxybenzoate carboxy-lyase of Idiomarina loihiensis (strain ATCC BAA-735 / DSM 15497 / L2-TR).